A 124-amino-acid polypeptide reads, in one-letter code: Fluoride-specific ion channel FluC 1 (124 aa).

The next 4 helical transmembrane spans lie at 1-21, 30-50, 64-84, and 93-113; these read MCAV…ALGA, LWPG…LLGY, FLGV…VDAV, and LYVV…MLAG. Na(+) is bound by residues Gly71 and Thr74.

Belongs to the fluoride channel Fluc/FEX (TC 1.A.43) family.

Its subcellular location is the cell membrane. The enzyme catalyses fluoride(in) = fluoride(out). With respect to regulation, na(+) is not transported, but it plays an essential structural role and its presence is essential for fluoride channel function. In terms of biological role, fluoride-specific ion channel. Important for reducing fluoride concentration in the cell, thus reducing its toxicity. The polypeptide is Fluoride-specific ion channel FluC 1 (Rhodococcus jostii (strain RHA1)).